The sequence spans 226 residues: 2-amino-5-formylamino-6-ribosylaminopyrimidin-4(3H)-one 5'-monophosphate deformylase (226 aa).

Residues E29, H31, D40, and H108 each coordinate Fe cation.

It belongs to the creatininase superfamily. FAPy deformylase family. Homodimer. It depends on Fe(2+) as a cofactor. Requires Zn(2+) as cofactor.

It carries out the reaction 2-amino-5-formylamino-6-(5-phospho-D-ribosylamino)pyrimidin-4(3H)-one + H2O = 2,5-diamino-6-(1-D-ribosylamino)pyrimidin-4(3H)-one 5'-phosphate + formate + H(+). It participates in cofactor biosynthesis; coenzyme F420 biosynthesis. Its pathway is cofactor biosynthesis; riboflavin biosynthesis. In terms of biological role, catalyzes the hydrolysis of the formamide of 2-amino-5-formylamino-6-ribosylamino-4(3H)-pyrimidinone 5'-monophosphate (FAPy) to form 2,5-diamino-6-ribosylamino-4(3H)-pyrimidinone 5'-phosphate (APy). The protein is 2-amino-5-formylamino-6-ribosylaminopyrimidin-4(3H)-one 5'-monophosphate deformylase of Methanocaldococcus vulcanius (strain ATCC 700851 / DSM 12094 / M7) (Methanococcus vulcanius).